The chain runs to 337 residues: Lipoyl synthase (337 aa).

Residues Cys-81, Cys-86, Cys-92, Cys-107, Cys-111, Cys-114, and Ser-323 each coordinate [4Fe-4S] cluster. Residues 93–312 (FSHGTATFMI…EEYGNALGFS (220 aa)) form the Radical SAM core domain.

Belongs to the radical SAM superfamily. Lipoyl synthase family. Requires [4Fe-4S] cluster as cofactor.

The protein localises to the cytoplasm. The enzyme catalyses [[Fe-S] cluster scaffold protein carrying a second [4Fe-4S](2+) cluster] + N(6)-octanoyl-L-lysyl-[protein] + 2 oxidized [2Fe-2S]-[ferredoxin] + 2 S-adenosyl-L-methionine + 4 H(+) = [[Fe-S] cluster scaffold protein] + N(6)-[(R)-dihydrolipoyl]-L-lysyl-[protein] + 4 Fe(3+) + 2 hydrogen sulfide + 2 5'-deoxyadenosine + 2 L-methionine + 2 reduced [2Fe-2S]-[ferredoxin]. The protein operates within protein modification; protein lipoylation via endogenous pathway; protein N(6)-(lipoyl)lysine from octanoyl-[acyl-carrier-protein]: step 2/2. In terms of biological role, catalyzes the radical-mediated insertion of two sulfur atoms into the C-6 and C-8 positions of the octanoyl moiety bound to the lipoyl domains of lipoate-dependent enzymes, thereby converting the octanoylated domains into lipoylated derivatives. The sequence is that of Lipoyl synthase from Xanthomonas oryzae pv. oryzae (strain MAFF 311018).